A 159-amino-acid polypeptide reads, in one-letter code: Putative phosphatidylinositol-3-phosphatase (159 aa).

A signal peptide spans 1–16; sequence MKRPSFLPVLIGTGFG. 4 consecutive transmembrane segments (helical) span residues 30 to 50, 54 to 74, 104 to 124, and 134 to 154; these read LLAS…ALLW, ALVV…ESCW, WYVI…PLGV, and VGVM…IAVA.

Its subcellular location is the membrane. The catalysed reaction is a 1,2-diacyl-sn-glycero-3-phospho-(1D-myo-inositol-3-phosphate) + H2O = a 1,2-diacyl-sn-glycero-3-phospho-(1D-myo-inositol) + phosphate. Its function is as follows. May be responsible for the conversion of phosphatidylinositol phosphate diacylglycerol (PIP-DAG) to phosphatidylinositol diacylglycerol (PI-DAG), making it a key enzyme in the inositol glycerophospholipid biosynthesis pathway. This Bacteroides thetaiotaomicron (strain ATCC 29148 / DSM 2079 / JCM 5827 / CCUG 10774 / NCTC 10582 / VPI-5482 / E50) protein is Putative phosphatidylinositol-3-phosphatase.